Here is a 313-residue protein sequence, read N- to C-terminus: Short-chain dehydrogenase/reductase family 9C member 7 (313 aa).

Position 29 to 53 (29 to 53 (FITGCDSGFGNLLAKQLVDRGMKVL)) interacts with NADP(+). Ser-160 contacts substrate. The active-site Proton acceptor is the Tyr-172. Ser-185 carries the post-translational modification Phosphoserine.

This sequence belongs to the short-chain dehydrogenases/reductases (SDR) family. As to expression, highly expressed in liver.

The protein resides in the cytoplasm. It carries out the reaction a N-[omega-(9R,10R)-epoxy-(13R)-hydroxy-(11E)-octadecenoyloxy]acyl-beta-D-glucosyl-(1&lt;-&gt;1)-sphing-4E-enine + NAD(+) = a N-[omega-(9R,10R)-epoxy-13-oxo-(11E)-octadecenoyloxy]acyl-beta-D-glucosyl-(1&lt;-&gt;1)-sphing-4E-enine + NADH + H(+). It catalyses the reaction a N-[omega-(9R,10R)-epoxy-(13R)-hydroxy-(11E)-octadecenoyloxy]-acylsphing-4E-enine + NAD(+) = a N-[omega-(9R,10R)-epoxy-13-oxo-(11E)-octadecenoyloxy]-acylsphing-4E-enine + NADH + H(+). Its function is as follows. Plays a crucial role in the formation of the epidermal permeability barrier. Catalyzes the NAD+-dependent dehydrogenation of the linoleate 9,10-trans-epoxy-11E-13-alcohol esterified in omega-O-acylceramides (such as in N-[omega-(9R,10R)-epoxy-(13R)-hydroxy-(11E)-octadecenoyloxy]-acylsphing-4E-enine) to the corresponding 13-ketone, the reactive moiety required for binding of epidermal ceramides to proteins. Displays weak conversion of all-trans-retinal to all-trans-retinol in the presence of NADH. Has apparently no steroid dehydrogenase activity. The chain is Short-chain dehydrogenase/reductase family 9C member 7 (Sdr9c7) from Mus musculus (Mouse).